Reading from the N-terminus, the 263-residue chain is MGNIKTLLENRFKKPTPDKMESLAKKRLEGELSPFLNGFTNPKLSSQEEARFRQLLEEYSFSKEISHNDLQQLCHLSAQVKQIHHQAILLHGERIKKVRELLKTYREGVFSAWLLLTYGNRQTPYNFLVYYELFSALPDTLKLELERLPRQAVYTLASREGSQEKKEEIIRNYQGETRGELLEIIRREFPLLPTDRRQSSLAQQAFSFFAKGTKLLQRCTDISQEELLSLEKLIKKLQKVTTNLLSNTKVSLNDDETQNSRNR.

It belongs to the UPF0137 (pGP6-D) family.

This Chlamydia trachomatis serovar D (strain ATCC VR-885 / DSM 19411 / UW-3/Cx) protein is Virulence plasmid protein pGP6-D-related protein.